The chain runs to 192 residues: Der GTPase-activating protein YihI (192 aa).

The span at 1 to 12 (MSAKQPNRKPAG) shows a compositional bias: basic residues. Disordered stretches follow at residues 1-87 (MSAK…IKEK) and 145-192 (DTDD…PKKK). The span at 13–26 (KRKESDASAQEGRE) shows a compositional bias: basic and acidic residues. Residues 27-36 (RKRAAKRKGL) show a composition bias toward basic residues. Over residues 145–172 (DTDDDEDEADFDEADFDEPGQPASEEEL) the composition is skewed to acidic residues. A compositionally biased stretch (basic and acidic residues) spans 183–192 (PEPKPEPKKK).

It belongs to the YihI family. In terms of assembly, interacts with Der.

Functionally, a GTPase-activating protein (GAP) that modifies Der/EngA GTPase function. May play a role in ribosome biogenesis. This chain is Der GTPase-activating protein YihI, found in Aeromonas hydrophila subsp. hydrophila (strain ATCC 7966 / DSM 30187 / BCRC 13018 / CCUG 14551 / JCM 1027 / KCTC 2358 / NCIMB 9240 / NCTC 8049).